A 366-amino-acid chain; its full sequence is Phosphoserine aminotransferase (366 aa).

Residue R42 coordinates L-glutamate. Residues 76–77, W101, T156, D178, and Q201 contribute to the pyridoxal 5'-phosphate site; that span reads AT. N6-(pyridoxal phosphate)lysine is present on K202. A pyridoxal 5'-phosphate-binding site is contributed by 243 to 244; it reads NT.

It belongs to the class-V pyridoxal-phosphate-dependent aminotransferase family. SerC subfamily. Homodimer. The cofactor is pyridoxal 5'-phosphate.

The protein resides in the cytoplasm. It catalyses the reaction O-phospho-L-serine + 2-oxoglutarate = 3-phosphooxypyruvate + L-glutamate. The catalysed reaction is 4-(phosphooxy)-L-threonine + 2-oxoglutarate = (R)-3-hydroxy-2-oxo-4-phosphooxybutanoate + L-glutamate. The protein operates within amino-acid biosynthesis; L-serine biosynthesis; L-serine from 3-phospho-D-glycerate: step 2/3. It functions in the pathway cofactor biosynthesis; pyridoxine 5'-phosphate biosynthesis; pyridoxine 5'-phosphate from D-erythrose 4-phosphate: step 3/5. Catalyzes the reversible conversion of 3-phosphohydroxypyruvate to phosphoserine and of 3-hydroxy-2-oxo-4-phosphonooxybutanoate to phosphohydroxythreonine. This is Phosphoserine aminotransferase from Aromatoleum aromaticum (strain DSM 19018 / LMG 30748 / EbN1) (Azoarcus sp. (strain EbN1)).